The following is a 200-amino-acid chain: Signal peptidase complex catalytic subunit SEC11 (200 aa).

At 1-15 (MFAELAPYLSNPRQT) the chain is on the cytoplasmic side. A helical; Signal-anchor for type II membrane protein membrane pass occupies residues 16-33 (LAQLLNFALVLSTAFMGW). Topologically, residues 34-200 (KALSVYTNSS…MGVMVMLQRE (167 aa)) are lumenal. Asn-41 carries N-linked (GlcNAc...) asparagine glycosylation. Catalysis depends on charge relay system residues Ser-53 and His-92. A disordered region spans residues 101-134 (GDGGKKSQRRLEREADKRSGPGLSSPVSHQMLTK). A compositionally biased stretch (basic and acidic residues) spans 103–119 (GGKKSQRRLEREADKRS). Asp-142 functions as the Charge relay system in the catalytic mechanism. Positions 186–197 (VLLGIMGVMVML) are C-terminal short (CTS) helix.

This sequence belongs to the peptidase S26B family. Component of the signal peptidase complex (SPC) composed of a catalytic subunit SEC11 and three accessory subunits SPC1, SPC2 and SPC3. The complex induces a local thinning of the ER membrane which is used to measure the length of the signal peptide (SP) h-region of protein substrates. This ensures the selectivity of the complex towards h-regions shorter than 18-20 amino acids. SPC associates with the translocon complex.

It is found in the endoplasmic reticulum membrane. It carries out the reaction Cleavage of hydrophobic, N-terminal signal or leader sequences from secreted and periplasmic proteins.. Its function is as follows. Catalytic component of the signal peptidase complex (SPC) which catalyzes the cleavage of N-terminal signal sequences from nascent proteins as they are translocated into the lumen of the endoplasmic reticulum. Specifically cleaves N-terminal signal peptides that contain a hydrophobic alpha-helix (h-region) shorter than 18-20 amino acids. The protein is Signal peptidase complex catalytic subunit SEC11 (SEC11) of Arthroderma benhamiae (strain ATCC MYA-4681 / CBS 112371) (Trichophyton mentagrophytes).